We begin with the raw amino-acid sequence, 179 residues long: MTFEDDLQASVRTIPDYPKPGVMFRDITTLLGDARAFRRAVDQLVHPWAGSKIDKVAGIEARGFILGGAVAHQVSAGFVPIRKKGKLPHQTVRMAYALEYGTDEMEMHVDAIARGERVILVDDLIATGGTAEGAVKLLRQIGADVVAACFIIDLPDLGGAAKLRAMDVPVRTLMAFEGH.

Belongs to the purine/pyrimidine phosphoribosyltransferase family. As to quaternary structure, homodimer.

The protein resides in the cytoplasm. It catalyses the reaction AMP + diphosphate = 5-phospho-alpha-D-ribose 1-diphosphate + adenine. It functions in the pathway purine metabolism; AMP biosynthesis via salvage pathway; AMP from adenine: step 1/1. Functionally, catalyzes a salvage reaction resulting in the formation of AMP, that is energically less costly than de novo synthesis. This is Adenine phosphoribosyltransferase from Nitrobacter winogradskyi (strain ATCC 25391 / DSM 10237 / CIP 104748 / NCIMB 11846 / Nb-255).